The primary structure comprises 276 residues: GPN-loop GTPase 3 (276 aa).

13 to 18 provides a ligand contact to GTP; that stretch reads SSGKST. The short motif at 70-72 is the Gly-Pro-Asn (GPN)-loop; involved in dimer interface element; that stretch reads GPN. Position 173-176 (173-176) interacts with GTP; sequence SKMD. Residues 257–276 are disordered; that stretch reads EDQEPKDPDRFEADDLEDDE. The span at 259–269 shows a compositional bias: basic and acidic residues; it reads QEPKDPDRFEA.

The protein belongs to the GPN-loop GTPase family. As to quaternary structure, heterodimers with gpn1 or gpn2. Binds to RNA polymerase II (RNAPII).

Its subcellular location is the cytoplasm. It is found in the nucleus. Its function is as follows. Small GTPase required for proper nuclear import of RNA polymerase II and III (RNAPII and RNAPIII). May act at an RNAP assembly step prior to nuclear import. The polypeptide is GPN-loop GTPase 3 (Schizosaccharomyces pombe (strain 972 / ATCC 24843) (Fission yeast)).